A 211-amino-acid polypeptide reads, in one-letter code: Uracil phosphoribosyltransferase (211 aa).

30-34 (KGLVR) lines the GTP pocket. Residues arginine 79, arginine 104, and 133–141 (DPMLATGIT) each bind 5-phospho-alpha-D-ribose 1-diphosphate. Residues isoleucine 197 and 202–204 (GDA) each bind uracil. Residue aspartate 203 coordinates 5-phospho-alpha-D-ribose 1-diphosphate.

It belongs to the UPRTase family. Requires Mg(2+) as cofactor.

The enzyme catalyses UMP + diphosphate = 5-phospho-alpha-D-ribose 1-diphosphate + uracil. Its pathway is pyrimidine metabolism; UMP biosynthesis via salvage pathway; UMP from uracil: step 1/1. With respect to regulation, allosterically activated by GTP. In terms of biological role, catalyzes the conversion of uracil and 5-phospho-alpha-D-ribose 1-diphosphate (PRPP) to UMP and diphosphate. This Pyrobaculum islandicum (strain DSM 4184 / JCM 9189 / GEO3) protein is Uracil phosphoribosyltransferase.